A 514-amino-acid polypeptide reads, in one-letter code: Importin subunit alpha-3 (514 aa).

In terms of domain architecture, IBB spans 1–51 (MSSNRQAYYKNNAKEQIGKEKRNEEVVSIRKDKREEAISKRRNINTQIEDD). The segment at 1 to 62 (MSSNRQAYYK…ETSTTPPGPF (62 aa)) is disordered. A compositionally biased stretch (basic and acidic residues) spans 12–39 (NAKEQIGKEKRNEEVVSIRKDKREEAIS). ARM repeat units follow at residues 101–142 (IDDL…TSEQ), 143–187 (TQAV…FRDY), 188–226 (CLEL…CKDP), 227–271 (APSP…EHIQ), 272–311 (MVIE…TDEQ), 312–353 (TQLV…NQQQ), 354–393 (VQDV…ISGR), and 394–436 (PNQV…KMAG). Residues 485-514 (GNVEGAQSSAFGGDVPPVPDAPNGGWNFGK) are disordered.

It belongs to the importin alpha family. Forms a complex with an importin beta subunit. May interact with transcription factor cebp-1 (via N-terminus). Interacts with cmk-1; affinity for cmk-1 is increased in the presence of Ca(2+) and calmodulin and leads to increased nuclear accumulation of cmk-1 in FLP neurons upon prolonged heat activation. In terms of tissue distribution, expressed in larval and adult germline and somatic tissues, including neurons.

Its subcellular location is the cytoplasm. The protein resides in the nucleus. Its function is as follows. Binds specifically and directly to substrates containing either a simple or bipartite NLS motif. Promotes docking of import substrates to the nuclear envelope. Seems to act as a cytosolic receptor for both simple and bipartite NLS motifs. Necessary for correct nucleoporin localization within the germline. Essential gene for embryonic and larval development. May be dispensable for axon development, but required for axon regeneration in both mechanosensory and motor neurons. Required for oogenic development, ima-1 and ima-2 cannot functionally compensate for loss of ima-3. This chain is Importin subunit alpha-3 (ima-3), found in Caenorhabditis elegans.